The chain runs to 249 residues: Adapter protein MecA (249 aa).

It belongs to the MecA family. As to quaternary structure, homodimer.

Functionally, enables the recognition and targeting of unfolded and aggregated proteins to the ClpC protease or to other proteins involved in proteolysis. The protein is Adapter protein MecA of Streptococcus thermophilus (strain ATCC BAA-250 / LMG 18311).